The primary structure comprises 78 residues: Small ribosomal subunit protein eS17 (78 aa).

This sequence belongs to the eukaryotic ribosomal protein eS17 family.

This is Small ribosomal subunit protein eS17 from Sulfurisphaera tokodaii (strain DSM 16993 / JCM 10545 / NBRC 100140 / 7) (Sulfolobus tokodaii).